A 244-amino-acid chain; its full sequence is Uridylate kinase (244 aa).

Position 12–15 (12–15 (KLSG)) interacts with ATP. The tract at residues 20-25 (GERGVG) is involved in allosteric activation by GTP. Gly-54 is a UMP binding site. ATP is bound by residues Gly-55 and Arg-59. UMP-binding positions include Asp-74 and 135–142 (IGSPYFST). Residues Asn-163, Tyr-169, and Asp-172 each coordinate ATP.

Belongs to the UMP kinase family. In terms of assembly, homohexamer.

It is found in the cytoplasm. It catalyses the reaction UMP + ATP = UDP + ADP. Its pathway is pyrimidine metabolism; CTP biosynthesis via de novo pathway; UDP from UMP (UMPK route): step 1/1. With respect to regulation, allosterically activated by GTP. Inhibited by UTP. Its function is as follows. Catalyzes the reversible phosphorylation of UMP to UDP. The polypeptide is Uridylate kinase (Streptococcus suis (strain 98HAH33)).